The primary structure comprises 189 residues: Putative manganese efflux pump MntP (189 aa).

Helical transmembrane passes span 3-23, 41-61, 65-85, 106-128, 141-161, and 168-188; these read PVSLIFLAFAMSTDAFAAAIG, IIFGVIEAITPLVGWLLGQAA, VADWDHWIAFVLLVLLGLHMI, WILAVTALATSIDALAVGVGLAF, GLATMTMVTLGTMLGRALGAV, and MVGGVVLILVGATILYEHLSA.

It belongs to the MntP (TC 9.B.29) family.

It is found in the cell inner membrane. Its function is as follows. Probably functions as a manganese efflux pump. This chain is Putative manganese efflux pump MntP, found in Pseudomonas aeruginosa (strain UCBPP-PA14).